A 168-amino-acid polypeptide reads, in one-letter code: Putative adenylate kinase (168 aa).

G10, G12, K13, T14, and T15 together coordinate ATP. Residues 28–51 (HLNERIREEGLDAGRDEERDSLVA) form an NMP region. The segment at 97 to 107 (DRGEPAAKAAE) is LID. ATP is bound at residue R98.

Belongs to the adenylate kinase family. AK6 subfamily. As to quaternary structure, interacts with uS11. Not a structural component of 40S pre-ribosomes, but transiently interacts with them by binding to uS11.

The catalysed reaction is AMP + ATP = 2 ADP. The enzyme catalyses ATP + H2O = ADP + phosphate + H(+). In terms of biological role, broad-specificity nucleoside monophosphate (NMP) kinase that catalyzes the reversible transfer of the terminal phosphate group between nucleoside triphosphates and monophosphates. Also has ATPase activity. Involved in the late maturation steps of the 30S ribosomal particles, specifically 16S rRNA maturation. While NMP activity is not required for ribosome maturation, ATPase activity is. Associates transiently with small ribosomal subunit protein uS11. ATP hydrolysis breaks the interaction with uS11. May temporarily remove uS11 from the ribosome to enable a conformational change of the ribosomal RNA that is needed for the final maturation step of the small ribosomal subunit. The protein is Putative adenylate kinase of Natronomonas pharaonis (strain ATCC 35678 / DSM 2160 / CIP 103997 / JCM 8858 / NBRC 14720 / NCIMB 2260 / Gabara) (Halobacterium pharaonis).